Here is a 294-residue protein sequence, read N- to C-terminus: Phosphate acetyltransferase (294 aa).

The protein belongs to the phosphate acetyltransferase and butyryltransferase family. As to quaternary structure, homotetramer.

The protein localises to the cytoplasm. It carries out the reaction acetyl-CoA + phosphate = acetyl phosphate + CoA. The protein operates within metabolic intermediate biosynthesis; acetyl-CoA biosynthesis; acetyl-CoA from acetate: step 2/2. Functionally, in addition to acetyl-CoA (100%), the enzyme accepts propionyl-CoA (60%) and butyryl-CoA (30%). The protein is Phosphate acetyltransferase (pta) of Thermotoga maritima (strain ATCC 43589 / DSM 3109 / JCM 10099 / NBRC 100826 / MSB8).